Consider the following 166-residue polypeptide: MTDANGAPAEAAPQIRMQVLAQYVRDMSFENMVAQKGLQGGDVQPDIQVQVSLDARKRSVEHQYEVITKFKVTSKNKSGSAETLFLLELDYGGIFHVENVPEDQLHPFLLIECPRLLFPFVRRIISDVTRDGGFPPLNVDTVDFLALYRMELARRAEAQKAAQPVQ.

It belongs to the SecB family. Homotetramer, a dimer of dimers. One homotetramer interacts with 1 SecA dimer.

It is found in the cytoplasm. One of the proteins required for the normal export of preproteins out of the cell cytoplasm. It is a molecular chaperone that binds to a subset of precursor proteins, maintaining them in a translocation-competent state. It also specifically binds to its receptor SecA. This chain is Protein-export protein SecB, found in Cereibacter sphaeroides (strain ATCC 17029 / ATH 2.4.9) (Rhodobacter sphaeroides).